The primary structure comprises 590 residues: Aspartate--tRNA(Asp/Asn) ligase (590 aa).

An L-aspartate-binding site is contributed by Glu176. The aspartate stretch occupies residues 200 to 203 (QLFK). L-aspartate-binding residues include Arg222 and His451. Position 222–224 (222–224 (RDE)) interacts with ATP. Glu485 lines the ATP pocket. Arg492 lines the L-aspartate pocket. 537–540 (GIDR) lines the ATP pocket.

The protein belongs to the class-II aminoacyl-tRNA synthetase family. Type 1 subfamily. In terms of assembly, homodimer.

The protein resides in the cytoplasm. The catalysed reaction is tRNA(Asx) + L-aspartate + ATP = L-aspartyl-tRNA(Asx) + AMP + diphosphate. Aspartyl-tRNA synthetase with relaxed tRNA specificity since it is able to aspartylate not only its cognate tRNA(Asp) but also tRNA(Asn). Reaction proceeds in two steps: L-aspartate is first activated by ATP to form Asp-AMP and then transferred to the acceptor end of tRNA(Asp/Asn). This chain is Aspartate--tRNA(Asp/Asn) ligase, found in Ehrlichia ruminantium (strain Welgevonden).